Consider the following 387-residue polypeptide: Phosphoglycerate kinase (387 aa).

Residues 21–23 (DLN), arginine 36, 59–62 (HLGR), arginine 113, and arginine 146 each bind substrate. Residues lysine 197, glutamate 314, and 340–343 (GGDT) contribute to the ATP site.

This sequence belongs to the phosphoglycerate kinase family. Monomer.

It localises to the cytoplasm. It carries out the reaction (2R)-3-phosphoglycerate + ATP = (2R)-3-phospho-glyceroyl phosphate + ADP. It participates in carbohydrate degradation; glycolysis; pyruvate from D-glyceraldehyde 3-phosphate: step 2/5. This chain is Phosphoglycerate kinase, found in Aliivibrio fischeri (strain ATCC 700601 / ES114) (Vibrio fischeri).